The sequence spans 249 residues: Triosephosphate isomerase (249 aa).

Substrate contacts are provided by asparagine 12 and lysine 14. Lysine 14 bears the N6-acetyllysine mark. At asparagine 16 the chain carries Deamidated asparagine. Tyrosine 68 is modified (3'-nitrotyrosine). Asparagine 72 is subject to Deamidated asparagine. Serine 80 is modified (phosphoserine). The active-site Electrophile is histidine 96. Serine 106 bears the Phosphoserine mark. Lysine 142 is covalently cross-linked (Glycyl lysine isopeptide (Lys-Gly) (interchain with G-Cter in SUMO1)). The residue at position 149 (lysine 149) is an N6-succinyllysine. Lysine 156 bears the N6-acetyllysine; alternate mark. Residue lysine 156 is modified to N6-succinyllysine; alternate. Serine 159 bears the Phosphoserine mark. Glutamate 166 functions as the Proton acceptor in the catalytic mechanism. Residue threonine 173 is modified to Phosphothreonine. Residue lysine 194 is modified to N6-acetyllysine; alternate. At lysine 194 the chain carries N6-succinyllysine; alternate. Lysine 194 carries the N6-methyllysine; alternate modification. Position 198 is a phosphoserine (serine 198). Residue tyrosine 209 is modified to 3'-nitrotyrosine. Phosphoserine is present on serine 212. At threonine 214 the chain carries Phosphothreonine. Serine 223 is modified (phosphoserine). Lysine 238 is subject to N6-acetyllysine.

It belongs to the triosephosphate isomerase family. As to quaternary structure, homodimer. In terms of processing, asn-16 and Asn-72 undergo deamidation which gives rise to four extra negative charges. These are expected to decrease subunit-subunit interactions and so expose the hydrophobic interface to the aqueous environment.

The protein resides in the cytoplasm. It catalyses the reaction D-glyceraldehyde 3-phosphate = dihydroxyacetone phosphate. The enzyme catalyses dihydroxyacetone phosphate = methylglyoxal + phosphate. Its pathway is carbohydrate degradation; glycolysis; D-glyceraldehyde 3-phosphate from glycerone phosphate: step 1/1. It participates in carbohydrate biosynthesis; gluconeogenesis. Its function is as follows. Triosephosphate isomerase is an extremely efficient metabolic enzyme that catalyzes the interconversion between dihydroxyacetone phosphate (DHAP) and D-glyceraldehyde-3-phosphate (G3P) in glycolysis and gluconeogenesis. Functionally, it is also responsible for the non-negligible production of methylglyoxal a reactive cytotoxic side-product that modifies and can alter proteins, DNA and lipids. The protein is Triosephosphate isomerase (TPI1) of Oryctolagus cuniculus (Rabbit).